The primary structure comprises 1615 residues: Mediator of RNA polymerase II transcription subunit 23 (1615 aa).

Disordered regions lie at residues 40–67 (RQKP…DLPP) and 1230–1270 (SSSS…NASE). A compositionally biased stretch (basic and acidic residues) spans 41 to 51 (QKPDESLRDPP). Positions 1230-1241 (SSSSNCSSRSGS) are enriched in low complexity.

Belongs to the Mediator complex subunit 23 family. Component of the Mediator complex.

Its subcellular location is the nucleus. Component of the Mediator complex, a coactivator involved in the regulated transcription of nearly all RNA polymerase II-dependent genes. Mediator functions as a bridge to convey information from gene-specific regulatory proteins to the basal RNA polymerase II transcription machinery. The Mediator complex, having a compact conformation in its free form, is recruited to promoters by direct interactions with regulatory proteins and serves for the assembly of a functional preinitiation complex with RNA polymerase II and the general transcription factors. The protein is Mediator of RNA polymerase II transcription subunit 23 (MED23) of Arabidopsis thaliana (Mouse-ear cress).